A 229-amino-acid polypeptide reads, in one-letter code: Type-5 uracil-DNA glycosylase (229 aa).

C19, C22, C123, and C138 together coordinate [4Fe-4S] cluster.

The protein belongs to the uracil-DNA glycosylase (UDG) superfamily. Type 5 (UDGb) family.

DNA glycosylase with broad substrate specificity. The polypeptide is Type-5 uracil-DNA glycosylase (Mycobacterium leprae (strain TN)).